We begin with the raw amino-acid sequence, 344 residues long: N-acetyl-gamma-glutamyl-phosphate reductase (344 aa).

Cysteine 149 is a catalytic residue.

Belongs to the NAGSA dehydrogenase family. Type 1 subfamily.

The protein localises to the cytoplasm. It catalyses the reaction N-acetyl-L-glutamate 5-semialdehyde + phosphate + NADP(+) = N-acetyl-L-glutamyl 5-phosphate + NADPH + H(+). It participates in amino-acid biosynthesis; L-arginine biosynthesis; N(2)-acetyl-L-ornithine from L-glutamate: step 3/4. In terms of biological role, catalyzes the NADPH-dependent reduction of N-acetyl-5-glutamyl phosphate to yield N-acetyl-L-glutamate 5-semialdehyde. The polypeptide is N-acetyl-gamma-glutamyl-phosphate reductase (Shouchella clausii (strain KSM-K16) (Alkalihalobacillus clausii)).